Here is a 265-residue protein sequence, read N- to C-terminus: Transcriptional repressor DcmR (265 aa).

The H-T-H motif DNA-binding region spans 17–36; sequence LDIKQAASLLNVSEASLRRW.

Monomer.

In terms of biological role, transcriptional repressor of the dcmA gene and of its own gene. The chain is Transcriptional repressor DcmR (dcmR) from Methylorubrum extorquens (strain DSM 6343 / CIP 106787 / DM4) (Methylobacterium extorquens).